The chain runs to 911 residues: Leucine--tRNA ligase (911 aa).

The short motif at 42-52 (PYPSGKLHMGH) is the 'HIGH' region element. The 'KMSKS' region motif lies at 659–663 (TMSKS). K662 contacts ATP.

Belongs to the class-I aminoacyl-tRNA synthetase family.

It localises to the cytoplasm. The enzyme catalyses tRNA(Leu) + L-leucine + ATP = L-leucyl-tRNA(Leu) + AMP + diphosphate. This is Leucine--tRNA ligase from Delftia acidovorans (strain DSM 14801 / SPH-1).